The primary structure comprises 152 residues: ATP synthase epsilon chain 2 (152 aa).

The protein belongs to the ATPase epsilon chain family. As to quaternary structure, F-type ATPases have 2 components, CF(1) - the catalytic core - and CF(0) - the membrane proton channel. CF(1) has five subunits: alpha(3), beta(3), gamma(1), delta(1), epsilon(1). CF(0) has three main subunits: a, b and c.

It is found in the cell inner membrane. Its function is as follows. Produces ATP from ADP in the presence of a proton gradient across the membrane. This chain is ATP synthase epsilon chain 2, found in Burkholderia orbicola (strain AU 1054).